A 424-amino-acid chain; its full sequence is Histidine--tRNA ligase (424 aa).

This sequence belongs to the class-II aminoacyl-tRNA synthetase family. In terms of assembly, homodimer.

Its subcellular location is the cytoplasm. The catalysed reaction is tRNA(His) + L-histidine + ATP = L-histidyl-tRNA(His) + AMP + diphosphate + H(+). The polypeptide is Histidine--tRNA ligase (hisS) (Bacillus subtilis (strain 168)).